The sequence spans 272 residues: Inositol monophosphatase (272 aa).

Mg(2+) is bound by residues E71, D90, I92, and D93. E71 contributes to the substrate binding site. Substrate contacts are provided by residues 92–95 (IDGT), 194–196 (GTA), E213, and D220. D220 provides a ligand contact to Mg(2+).

The protein belongs to the inositol monophosphatase superfamily. The cofactor is Mg(2+).

It is found in the cytoplasm. It carries out the reaction a myo-inositol phosphate + H2O = myo-inositol + phosphate. It catalyses the reaction alpha-D-galactose 1-phosphate + H2O = D-galactose + phosphate. Its pathway is polyol metabolism; myo-inositol biosynthesis; myo-inositol from D-glucose 6-phosphate: step 2/2. Inhibited by Li(+), Ca(2+) and Mn(2+), but also by Mg(2+) at concentrations above 3 mM. Functionally, responsible for the provision of inositol required for synthesis of phosphatidylinositol and polyphosphoinositides. Has broad substrate specificity and can use myo-inositol monophosphates, myo-inositol 1,3-diphosphate, myo-inositol 1,4-diphosphate, scyllo-inositol-phosphate, D-galactose 1-phosphate, glucose-1-phosphate, glucose-6-phosphate, fructose-1-phosphate, beta-glycerophosphate, and 2'-AMP as substrates. This is Inositol monophosphatase (impa1) from Dictyostelium discoideum (Social amoeba).